Reading from the N-terminus, the 752-residue chain is Ribosomal protein S6 kinase 2 alpha (752 aa).

Positions 80–339 (FELLKVLGQG…AEEIKRHPFY (260 aa)) constitute a Protein kinase 1 domain. Residues 86-94 (LGQGSFGKV) and Lys-112 each bind ATP. Residue Asp-205 is the Proton acceptor of the active site. Phosphoserine is present on Ser-239. The region spanning 340-409 (STIDWNKLYR…VATGLMEDSK (70 aa)) is the AGC-kinase C-terminal domain. Thr-377 is subject to Phosphothreonine. At Ser-381 the chain carries Phosphoserine. Ser-398 is subject to Phosphoserine; by autocatalysis. A Protein kinase 2 domain is found at 435–692 (YVVKEAIGVG…AKQVLQHPWI (258 aa)). ATP is bound by residues 441-449 (IGVGSYSVC) and Lys-464. Asp-552 functions as the Proton acceptor in the catalytic mechanism. Position 590 is a phosphothreonine (Thr-590). Ser-749 bears the Phosphoserine mark.

Belongs to the protein kinase superfamily. AGC Ser/Thr protein kinase family. S6 kinase subfamily. Mg(2+) is required as a cofactor. Autophosphorylated on Ser-398, as part of the activation process. In terms of tissue distribution, small and large intestine, spleen, stomach, and bursa, and to a lesser extent lung and kidney.

The catalysed reaction is L-seryl-[protein] + ATP = O-phospho-L-seryl-[protein] + ADP + H(+). It carries out the reaction L-threonyl-[protein] + ATP = O-phospho-L-threonyl-[protein] + ADP + H(+). With respect to regulation, activated by multiple phosphorylations on threonine and serine residues. Its function is as follows. Serine/threonine kinase that may play a role in mediating the growth-factor and stress induced activation of transcription. This chain is Ribosomal protein S6 kinase 2 alpha (RPS6KA), found in Gallus gallus (Chicken).